A 440-amino-acid polypeptide reads, in one-letter code: Phosphatidylcholine-sterol acyltransferase (440 aa).

The N-terminal stretch at 1–24 (MGLPGSPWQWVLLLLGLLLPPATS) is a signal peptide. Asparagine 44 carries an N-linked (GlcNAc...) asparagine glycan. Cysteines 74 and 98 form a disulfide. Asparagine 108 is a glycosylation site (N-linked (GlcNAc...) asparagine). Catalysis depends on serine 205, which acts as the Nucleophile. A glycan (N-linked (GlcNAc...) asparagine) is linked at asparagine 296. A disulfide bridge connects residues cysteine 337 and cysteine 380. The active-site Charge relay system is aspartate 369. N-linked (GlcNAc...) asparagine glycosylation occurs at asparagine 397. The Charge relay system role is filled by histidine 401. A glycan (N-linked (GlcNAc...) asparagine) is linked at asparagine 408.

This sequence belongs to the AB hydrolase superfamily. Lipase family. In terms of tissue distribution, detected in blood plasma (at protein level).

Its subcellular location is the secreted. The enzyme catalyses a sterol + a 1,2-diacyl-sn-glycero-3-phosphocholine = a sterol ester + a 1-acyl-sn-glycero-3-phosphocholine. It catalyses the reaction a 1-O-alkyl-2-acetyl-sn-glycero-3-phosphocholine + H2O = a 1-O-alkyl-sn-glycero-3-phosphocholine + acetate + H(+). It carries out the reaction 1-hexadecanoyl-2-(9Z,12Z-octadecadienoyl)-sn-glycero-3-phosphocholine + H2O = (9Z,12Z)-octadecadienoate + 1-hexadecanoyl-sn-glycero-3-phosphocholine + H(+). The catalysed reaction is 1-hexadecanoyl-2-(5Z,8Z,11Z,14Z-eicosatetraenoyl)-sn-glycero-3-phosphocholine + H2O = 1-hexadecanoyl-sn-glycero-3-phosphocholine + (5Z,8Z,11Z,14Z)-eicosatetraenoate + H(+). The enzyme catalyses 1-hexadecanoyl-2-(5Z,8Z,11Z,14Z-eicosatetraenoyl)-sn-glycero-3-phosphocholine + cholesterol = cholesteryl (5Z,8Z,11Z,14Z)-eicosatetraenoate + 1-hexadecanoyl-sn-glycero-3-phosphocholine. It catalyses the reaction 1-hexadecanoyl-2-(9Z-octadecenoyl)-sn-glycero-3-phosphocholine + cholesterol = cholesteryl (9Z-octadecenoate) + 1-hexadecanoyl-sn-glycero-3-phosphocholine. It carries out the reaction a 1-hexadecanoyl-2-acyl-sn-glycero-3-phosphocholine + (24S)-hydroxycholesterol = (24S)-24-hydroxycholesterol ester + 1-hexadecanoyl-sn-glycero-3-phosphocholine. The catalysed reaction is (24S)-hydroxycholesterol + 1-hexadecanoyl-2-(9Z,12Z-octadecadienoyl)-sn-glycero-3-phosphocholine = (24S)-hydroxycholesterol 3-linoleoate + 1-hexadecanoyl-sn-glycero-3-phosphocholine. The enzyme catalyses 1-hexadecanoyl-2-(8Z,11Z,14Z-eicosatrienoyl)-sn-glycero-3-phosphocholine + cholesterol = cholesteryl (8Z,11Z,14Z)-eicosatrienoate + 1-hexadecanoyl-sn-glycero-3-phosphocholine. It catalyses the reaction 1-hexadecanoyl-2-(5Z,8Z,11Z-eicosatrienoyl)-sn-glycero-3-phosphocholine + cholesterol = cholesteryl (5Z,8Z,11Z)-eicosatrienoate + 1-hexadecanoyl-sn-glycero-3-phosphocholine. It carries out the reaction 1-hexadecanoyl-2-(5Z,8Z,11Z,14Z,17Z-eicosapentaenoyl)-sn-glycero-3-phosphocholine + cholesterol = (5Z,8Z,11Z,14Z,17Z-eicosapentaenoyl)-cholesterol + 1-hexadecanoyl-sn-glycero-3-phosphocholine. The catalysed reaction is 1-hexadecanoyl-2-(9Z,12Z-octadecadienoyl)-sn-glycero-3-phosphocholine + cholesterol = cholesteryl (9Z,12Z)-octadecadienoate + 1-hexadecanoyl-sn-glycero-3-phosphocholine. The enzyme catalyses 1-hexadecanoyl-2-(6Z,9Z,12Z-octadecatrienoyl)-sn-glycero-3-phosphocholine + cholesterol = (6Z,9Z,12Z-octadecatrienoyl)-cholesterol + 1-hexadecanoyl-sn-glycero-3-phosphocholine. It catalyses the reaction 1-hexadecanoyl-2-(11Z,14Z,17Z-eicosatrienoyl)-sn-glycero-3-phosphocholine + cholesterol = (11Z,14Z,17Z-eicosatrienoyl)-cholesterol + 1-hexadecanoyl-sn-glycero-3-phosphocholine. It carries out the reaction 1-hexadecanoyl-2-(9Z,12Z,15Z-octadecatrienoyl)-sn-glycero-3-phosphocholine + cholesterol = (9Z,12Z,15Z-octadecatrienoyl)-cholesterol + 1-hexadecanoyl-sn-glycero-3-phosphocholine. The catalysed reaction is a 1-O-alkyl-2-acetyl-sn-glycero-3-phosphocholine + 1-hexadecanoyl-sn-glycero-3-phosphocholine = 1-hexadecanoyl-2-acetyl-sn-glycero-3-phosphocholine + a 1-O-alkyl-sn-glycero-3-phosphocholine. Functionally, central enzyme in the extracellular metabolism of plasma lipoproteins. Synthesized mainly in the liver and secreted into plasma where it converts cholesterol and phosphatidylcholines (lecithins) to cholesteryl esters and lysophosphatidylcholines on the surface of high and low density lipoproteins (HDLs and LDLs). The cholesterol ester is then transported back to the liver. Also produced in the brain by primary astrocytes, and esterifies free cholesterol on nascent APOE-containing lipoproteins secreted from glia and influences cerebral spinal fluid (CSF) APOE- and APOA1 levels. Together with APOE and the cholesterol transporter ABCA1, plays a key role in the maturation of glial-derived, nascent lipoproteins. Required for remodeling high-density lipoprotein particles into their spherical forms. Has a preference for plasma 16:0-18:2 or 18:O-18:2 phosphatidylcholines. Catalyzes the hydrolysis of 1-O-alkyl-2-acetyl-sn-glycero-3-phosphocholine (platelet-activating factor or PAF) to 1-O-alkyl-sn-glycero-3-phosphocholine (lyso-PAF). Also catalyzes the transfer of the acetate group from PAF to 1-hexadecanoyl-sn-glycero-3-phosphocholine forming lyso-PAF. Catalyzes the esterification of (24S)-hydroxycholesterol (24(S)OH-C), also known as cerebrosterol to produce 24(S)OH-C monoesters. The polypeptide is Phosphatidylcholine-sterol acyltransferase (Lcat) (Rattus norvegicus (Rat)).